The following is a 78-amino-acid chain: Esculentin-2ISa (78 aa).

Positions 1 to 22 (MFTLKKSLLLLFFLGTISLSVC) are cleaved as a signal peptide. Positions 23–39 (KQERDADYEDKGEVEEV) are cleaved as a propeptide — removed in mature form. The cysteines at positions 72 and 78 are disulfide-linked.

Expressed by the skin glands.

It is found in the secreted. Has antimicrobial activity against Gram-negative bacterium E.coli ATCC 8739 (MIC=12.5 ug), against Gram positive bacteria S.aureus ATCC 6538 (MIC=3.1 ug), methicillin-resistant S.aureus ATCC 43300 (MIC=25 ug), B.subtilis ATCC 6633 (MIC=6.3 ug) and against fungus C.albicans ATCC 90028 (MIC=100 ug). The chain is Esculentin-2ISa from Odorrana ishikawae (Ishikawa's frog).